Here is a 506-residue protein sequence, read N- to C-terminus: Histidine ammonia-lyase (506 aa).

A cross-link (5-imidazolinone (Ala-Gly)) is located at residues A143–G145. A 2,3-didehydroalanine (Ser) modification is found at S144.

The protein belongs to the PAL/histidase family. Post-translationally, contains an active site 4-methylidene-imidazol-5-one (MIO), which is formed autocatalytically by cyclization and dehydration of residues Ala-Ser-Gly.

Its subcellular location is the cytoplasm. The catalysed reaction is L-histidine = trans-urocanate + NH4(+). Its pathway is amino-acid degradation; L-histidine degradation into L-glutamate; N-formimidoyl-L-glutamate from L-histidine: step 1/3. The chain is Histidine ammonia-lyase from Salmonella choleraesuis (strain SC-B67).